We begin with the raw amino-acid sequence, 210 residues long: MMLNLIIVHLFGLMTPGPDFFYVSRMAASNSRRNTVCGILGITLGIAFWGMLSMLGLAVLFVTIPALHGVIMLLGGSYLAYLGFLMARSKKYAKFESHSDTEFNQQTTIKKEILKGLLVNLSNAKVVVYFSSVMSLVLVNITEMWQIILAFAVIVVETFCYFYVISLIFSRNIAKRLYSQYSRYIDNMAGIVFLFFGCVLVYNGINEIIH.

5 helical membrane passes run 42–62, 66–86, 126–146, 147–167, and 189–209; these read ITLG…VLFV, ALHG…GFLM, VVVY…EMWQ, IILA…VISL, and AGIV…NEII.

Belongs to the Rht family.

The protein localises to the cell membrane. This is an uncharacterized protein from Haemophilus influenzae (strain ATCC 51907 / DSM 11121 / KW20 / Rd).